A 461-amino-acid polypeptide reads, in one-letter code: MAQVLTQFDTIAAISTPIGEGGISIVRLSGEDAVAIANKLFKGADLTKVPTHTIHYGHIVDPKTKEVVDETMVSVLRAPKTFTREDMVEINCHGGMIVTNDILQLLLANGARMADPGEFTKRAFMNGRIDLTQAESVMDIVRAKTDKSRQVAMTQLAGGLLDKIKTMRQELLDTMAHEEVNIDYPEYDMDDLTSQEMKKKAQEVSKQIEQLLQTAQEGKIIRNGLATAIVGRPNVGKSSLLNYLTQDDKAIVTDIAGTTRDTLEEYVSVKGVPLKLIDTAGIHHTEDKVEKIGVERSKKAIKEADLVLLLLDASQDLTAEDKRLLDLTANKKRIIILNKQDLGTKISQEMIKDITDNPIIVTSILKQKNMDALENAIEKLFFSGIENSQNQILVTNQRQAGLLTKAKQSLEDVISGIDDAMPLDLVQIDLKNAWDTLGEITGESAPDELITQLFSQFCLGK.

The (6S)-5-formyl-5,6,7,8-tetrahydrofolate site is built by Arg-27, Glu-89, and Arg-128. Residues 224-382 enclose the TrmE-type G domain; sequence GLATAIVGRP…LENAIEKLFF (159 aa). Asn-234 serves as a coordination point for K(+). GTP-binding positions include 234-239, 253-259, and 278-281; these read NVGKSS, TDIAGTT, and DTAG. Ser-238 provides a ligand contact to Mg(2+). Positions 253, 255, and 258 each coordinate K(+). Thr-259 contributes to the Mg(2+) binding site. Lys-461 lines the (6S)-5-formyl-5,6,7,8-tetrahydrofolate pocket.

It belongs to the TRAFAC class TrmE-Era-EngA-EngB-Septin-like GTPase superfamily. TrmE GTPase family. In terms of assembly, homodimer. Heterotetramer of two MnmE and two MnmG subunits. K(+) serves as cofactor.

The protein resides in the cytoplasm. Exhibits a very high intrinsic GTPase hydrolysis rate. Involved in the addition of a carboxymethylaminomethyl (cmnm) group at the wobble position (U34) of certain tRNAs, forming tRNA-cmnm(5)s(2)U34. This Lactobacillus gasseri (strain ATCC 33323 / DSM 20243 / BCRC 14619 / CIP 102991 / JCM 1131 / KCTC 3163 / NCIMB 11718 / NCTC 13722 / AM63) protein is tRNA modification GTPase MnmE.